Here is a 70-residue protein sequence, read N- to C-terminus: Conotoxin Pl171 (70 aa).

The first 21 residues, 1 to 21 (MGMRMMFTMILLVVLVTTVVS), serve as a signal peptide directing secretion. 2 disulfide bridges follow: Cys-54-Cys-61 and Cys-55-Cys-67. Phe-69 is subject to Phenylalanine amide.

It belongs to the conotoxin A superfamily. As to expression, expressed by the venom duct.

The protein localises to the secreted. Probable neurotoxin with unknown target. Possibly targets ion channels. This chain is Conotoxin Pl171, found in Conus planorbis (Planorbis cone).